We begin with the raw amino-acid sequence, 549 residues long: Eukaryotic translation initiation factor 3 subunit D-2 (549 aa).

A disordered region spans residues 107–157; it reads ARVKGRSGRGPGMLGVAGSMAGGGTTSGSTKYGKGRESRRNQGRRFARNAP. Positions 114–132 are enriched in gly residues; that stretch reads GRGPGMLGVAGSMAGGGTT. The RNA gate stretch occupies residues 288-302; it reads QFDLLTVNETSLEPP. Positions 527–549 are disordered; that stretch reads NSFDSDAEDEENSSEPFANSLDN. The segment covering 529 to 539 has biased composition (acidic residues); that stretch reads FDSDAEDEENS.

It belongs to the eIF-3 subunit D family. Component of the eukaryotic translation initiation factor 3 (eIF-3) complex. The eIF-3 complex interacts with pix.

The protein resides in the cytoplasm. MRNA cap-binding component of the eukaryotic translation initiation factor 3 (eIF-3) complex, which is involved in protein synthesis of a specialized repertoire of mRNAs and, together with other initiation factors, stimulates binding of mRNA and methionyl-tRNAi to the 40S ribosome. The eIF-3 complex specifically targets and initiates translation of a subset of mRNAs involved in cell proliferation. In the eIF-3 complex, eif3d specifically recognizes and binds the 7-methylguanosine cap of a subset of mRNAs. This chain is Eukaryotic translation initiation factor 3 subunit D-2, found in Drosophila ananassae (Fruit fly).